We begin with the raw amino-acid sequence, 538 residues long: MMNLIEFPWLTAIIALPLVAALAIPIIPDKEGKTVRWYGLGVAFADFALMIAAFWHYYDFQSSSYQFVEKYAWVPQIGLNWSVAVDGLSMPLLLLTGLINTLAIFAAWKVTNKPRLFYGLMLVMYSAQLGVFVAQDLLLFFLMWEIELVPVYLLISIWGGPKRRYAATKFILYTAAASIFILVAGFALAFSGDTVTFDIAALGMKEYPKAIELLAYAGFLIAFGVKLPIFPLHTWLPDAHGEASAPGSMILAGVLLKMGGYALIRFNMEMLPDAHVYFAPVLAILGVVNIVYGACCAFAQTNLKRRLAYSSIAHMGFVLIGLASYTEIGVSGAVLQMVSHGLVAASLFFLTGVTYERTHTLLMDKMGGIGKIMPKTFALYTAGAMASLALPGMSGFVGELMVFIGIATSDVYSSSFKVVVVLLSAVGVILTPIYLLSMLRQVFYGKQSDELHLDAFVPDVKPRELFITASLLLPIIGIGLYPKLITQTYDAKTVEIAAHARQVLPVVAGQQPSSLYSQIFTAPTLANAQVESLVNISK.

The next 13 helical transmembrane spans lie at 7 to 27 (FPWL…IPII), 37 to 57 (WYGL…FWHY), 88 to 108 (LSMP…FAAW), 116 to 136 (LFYG…VAQD), 137 to 157 (LLLF…LISI), 170 to 190 (FILY…ALAF), 210 to 230 (AIEL…LPIF), 244 to 264 (SAPG…YALI), 278 to 298 (FAPV…CCAF), 315 to 335 (MGFV…GAVL), 336 to 356 (QMVS…VTYE), 388 to 408 (LALP…GIAT), and 418 to 438 (VVVV…LLSM).

This sequence belongs to the complex I subunit 4 family.

Its subcellular location is the cellular thylakoid membrane. The catalysed reaction is a plastoquinone + NADH + (n+1) H(+)(in) = a plastoquinol + NAD(+) + n H(+)(out). It carries out the reaction a plastoquinone + NADPH + (n+1) H(+)(in) = a plastoquinol + NADP(+) + n H(+)(out). Functionally, NDH-1 shuttles electrons from NAD(P)H, via FMN and iron-sulfur (Fe-S) centers, to quinones in the respiratory chain. The immediate electron acceptor for the enzyme in this species is believed to be plastoquinone. Couples the redox reaction to proton translocation (for every two electrons transferred, four hydrogen ions are translocated across the cytoplasmic membrane), and thus conserves the redox energy in a proton gradient. This Nostoc sp. (strain PCC 7120 / SAG 25.82 / UTEX 2576) protein is NAD(P)H-quinone oxidoreductase chain 4 1.